A 508-amino-acid chain; its full sequence is Cytochrome P450 4A12 (508 aa).

Transmembrane regions (helical) follow at residues Ile-10 to Leu-30 and Phe-120 to His-140. Glu-319 contributes to the heme binding site. At Ser-438 the chain carries Phosphoserine. Cys-455 contributes to the heme binding site.

This sequence belongs to the cytochrome P450 family. Heme serves as cofactor. As to expression, expressed at proximal straight tubules and preglomerular arteries of the outer medulla as well in the cortex regions of kidney (at protein level).

It localises to the endoplasmic reticulum membrane. The protein localises to the microsome membrane. It catalyses the reaction an organic molecule + reduced [NADPH--hemoprotein reductase] + O2 = an alcohol + oxidized [NADPH--hemoprotein reductase] + H2O + H(+). The catalysed reaction is dodecanoate + reduced [NADPH--hemoprotein reductase] + O2 = 12-hydroxydodecanoate + oxidized [NADPH--hemoprotein reductase] + H2O + H(+). It carries out the reaction dodecanoate + reduced [NADPH--hemoprotein reductase] + O2 = (11R)-hydroxydodecanoate + oxidized [NADPH--hemoprotein reductase] + H2O + H(+). The enzyme catalyses (5Z,8Z,11Z,14Z)-eicosatetraenoate + reduced [NADPH--hemoprotein reductase] + O2 = 20-hydroxy-(5Z,8Z,11Z,14Z)-eicosatetraenoate + oxidized [NADPH--hemoprotein reductase] + H2O + H(+). It catalyses the reaction prostaglandin A1 + reduced [NADPH--hemoprotein reductase] + O2 = 20-hydroxy prostaglandin A1 + oxidized [NADPH--hemoprotein reductase] + H2O + H(+). It participates in lipid metabolism; fatty acid metabolism. Its activity is regulated as follows. Activated by cytochrome b5 and phosphatidylserine. In terms of biological role, a cytochrome P450 monooxygenase involved in the metabolism of fatty acids. Catalyzes predominantly the oxidation of the terminal carbon (omega-oxidation) of saturated and unsaturated fatty acids. May act as a major omega-hydroxylase for dodecanoic (lauric) acid in kidney. At preglomerular arteries, may participate in omega-hydroxylation of (5Z,8Z,11Z,14Z)-eicosatetraenoic acid (arachidonate) to 20-hydroxyeicosatetraenoic acid (20-HETE), a signaling molecule acting both as vasoconstrictive and natriuretic with overall effect on arterial blood pressure. Can also catalyze the oxidation of the penultimate carbon (omega-1 oxidation) of fatty acids with lower efficiency, displaying a preference for the (R)-stereoisomer. Mechanistically, uses molecular oxygen inserting one oxygen atom into a substrate, and reducing the second into a water molecule, with two electrons provided by NADPH via cytochrome P450 reductase (NADPH--hemoprotein reductase). This Rattus norvegicus (Rat) protein is Cytochrome P450 4A12 (Cyp4a12).